Consider the following 175-residue polypeptide: MRCVKALQLTLAVIKPDAMAHPLILEALHQKILENFIIIRKKDLIWRKADSEMFYAEHSGRFFFQRLVEFMSSGPMRAYILAREDAITHWRTMMGPTKVFRARFSSPETLRGKYGLTDTRNTTHGSDSIESAKREISFFFPEFSAEEWMMREEPHFRLGHTEYNEESQIHTVKHT.

Residues K15, F63, R91, T97, R111, and N121 each coordinate ATP. The Pros-phosphohistidine intermediate role is filled by H124.

The protein belongs to the NDK family. Mg(2+) is required as a cofactor.

The enzyme catalyses a 2'-deoxyribonucleoside 5'-diphosphate + ATP = a 2'-deoxyribonucleoside 5'-triphosphate + ADP. It catalyses the reaction a ribonucleoside 5'-diphosphate + ATP = a ribonucleoside 5'-triphosphate + ADP. Functionally, major role in the synthesis of nucleoside triphosphates other than ATP. The ATP gamma phosphate is transferred to the NDP beta phosphate via a ping-pong mechanism, using a phosphorylated active-site intermediate. The sequence is that of Nucleoside diphosphate kinase 6 (nme6) from Danio rerio (Zebrafish).